A 1107-amino-acid polypeptide reads, in one-letter code: DNA-directed RNA polymerase subunit beta (1107 aa).

Positions 1062–1075 (DNEGNEKEKARELG) are enriched in basic and acidic residues. The segment at 1062–1081 (DNEGNEKEKARELGLDLPDN) is disordered.

The protein belongs to the RNA polymerase beta chain family. As to quaternary structure, the RNAP catalytic core consists of 2 alpha, 1 beta, 1 beta' and 1 omega subunit. When a sigma factor is associated with the core the holoenzyme is formed, which can initiate transcription.

It catalyses the reaction RNA(n) + a ribonucleoside 5'-triphosphate = RNA(n+1) + diphosphate. DNA-dependent RNA polymerase catalyzes the transcription of DNA into RNA using the four ribonucleoside triphosphates as substrates. This is DNA-directed RNA polymerase subunit beta from Syntrophomonas wolfei subsp. wolfei (strain DSM 2245B / Goettingen).